A 215-amino-acid chain; its full sequence is Probable phosphoglycerate mutase GpmB (215 aa).

Residues 8–15 (RHGETQWN), 21–22 (QG), R58, R60, 82–85 (ELNM), 104–105 (RR), and 151–152 (GI) contribute to the substrate site. The active-site Tele-phosphohistidine intermediate is H9. E82 serves as the catalytic Proton donor/acceptor.

It belongs to the phosphoglycerate mutase family. GpmB subfamily.

It carries out the reaction (2R)-2-phosphoglycerate = (2R)-3-phosphoglycerate. The protein operates within carbohydrate degradation; glycolysis; pyruvate from D-glyceraldehyde 3-phosphate: step 3/5. The chain is Probable phosphoglycerate mutase GpmB from Shigella boydii serotype 18 (strain CDC 3083-94 / BS512).